Consider the following 529-residue polypeptide: Inosine-5'-monophosphate dehydrogenase (529 aa).

2 CBS domains span residues 129-185 and 189-246; these read MVTD…SKQV and MTKT…PLAT. NAD(+)-binding positions include D283 and 334-336; that span reads GVG. Positions 336 and 338 each coordinate K(+). Residue S339 participates in IMP binding. Position 341 (C341) interacts with K(+). The active-site Thioimidate intermediate is C341. IMP contacts are provided by residues 374-376, 397-398, and 421-425; these read DGG, GS, and YRGMG. The active-site Proton acceptor is R443. E458 provides a ligand contact to IMP. The K(+) site is built by E511, S512, and H513.

This sequence belongs to the IMPDH/GMPR family. As to quaternary structure, homotetramer. K(+) serves as cofactor.

It catalyses the reaction IMP + NAD(+) + H2O = XMP + NADH + H(+). Its pathway is purine metabolism; XMP biosynthesis via de novo pathway; XMP from IMP: step 1/1. Its activity is regulated as follows. Mycophenolic acid (MPA) is a non-competitive inhibitor that prevents formation of the closed enzyme conformation by binding to the same site as the amobile flap. In contrast, mizoribine monophosphate (MZP) is a competitive inhibitor that induces the closed conformation. MPA is a potent inhibitor of mammalian IMPDHs but a poor inhibitor of the bacterial enzymes. MZP is a more potent inhibitor of bacterial IMPDH. Functionally, catalyzes the conversion of inosine 5'-phosphate (IMP) to xanthosine 5'-phosphate (XMP), the first committed and rate-limiting step in the de novo synthesis of guanine nucleotides, and therefore plays an important role in the regulation of cell growth. The polypeptide is Inosine-5'-monophosphate dehydrogenase (Mycobacterium leprae (strain TN)).